The primary structure comprises 128 residues: Large ribosomal subunit protein bL17 (128 aa).

The protein belongs to the bacterial ribosomal protein bL17 family. As to quaternary structure, part of the 50S ribosomal subunit. Contacts protein L32.

This Pseudomonas fluorescens (strain ATCC BAA-477 / NRRL B-23932 / Pf-5) protein is Large ribosomal subunit protein bL17.